A 653-amino-acid polypeptide reads, in one-letter code: Large subunit GTPase 1 homolog (653 aa).

Residues 1–47 (MGKKRGTGLGRSLQRQRGSERRGASSWLHASEVVGESGPERRSAVEQ) form a disordered region. In terms of domain architecture, CP-type G spans 155–439 (WRQLWRVIER…LCDCPGLVMP (285 aa)). GTP is bound at residue 203-206 (NKAD). The span at 248–275 (ADSVADDLSDSEEESSSQEEDVTAEDSA) shows a compositional bias: acidic residues. The disordered stretch occupies residues 248 to 323 (ADSVADDLSD…TCSEDEGGDK (76 aa)). Positions 276–291 (ESTSTGSALQTENQCL) are enriched in polar residues. Residues 293-320 (SDDDSSDEYEDCEDEEEDDWQTCSEDEG) are compositionally biased toward acidic residues. GTP is bound by residues 388–395 (GYPNVGKS) and 432–435 (DCPG). Residues 621–653 (APSAGSVVGKPWKKHGNRNKKEKVRRITKHLEN) form a disordered region. Positions 631–653 (PWKKHGNRNKKEKVRRITKHLEN) are enriched in basic residues.

This sequence belongs to the TRAFAC class YlqF/YawG GTPase family. LSG1 subfamily.

It is found in the cytoplasm. The protein resides in the endoplasmic reticulum. It localises to the nucleus. The protein localises to the cajal body. It carries out the reaction GTP + H2O = GDP + phosphate + H(+). In terms of biological role, GTPase required for the XPO1/CRM1-mediated nuclear export of the 60S ribosomal subunit. Probably acts by mediating the release of NMD3 from the 60S ribosomal subunit after export into the cytoplasm. Its function is as follows. Functions as a GTPase. May act by mediating the release of NMD3 from the 60S ribosomal subunit after export into the cytoplasm during the 60S ribosomal subunit maturation. The protein is Large subunit GTPase 1 homolog of Gallus gallus (Chicken).